Consider the following 390-residue polypeptide: Immunoglobulin mu Fc receptor (390 aa).

An N-terminal signal peptide occupies residues 1 to 16 (MDFWLWPLYFLPVSGA). The Extracellular segment spans residues 17 to 251 (LRILPEVKVE…GSQSGREGQG (235 aa)). Residues 23–123 (VKVEGELGGS…KTQKVTLNVH (101 aa)) form the Ig-like domain. The CDR4 stretch occupies residues 33–115 (VTIKCPLPEM…AGMNTDRGKT (83 aa)). 2 disulfide bridges follow: Cys37–Cys104 and Cys49–Cys58. The interval 40 to 45 (PEMHVR) is CDR1. The CDR2 stretch occupies residues 59-70 (GTVVSTTNFIKA). The residue at position 92 (Thr92) is a Phosphothreonine. The segment at 106–115 (AGMNTDRGKT) is CDR3. Residues 166 to 204 (PAQRGKVPPVHHSSPTTQITHRPRVSRASSVAGDKPRTF) are disordered. A helical membrane pass occupies residues 252-272 (FHILIPTILGLFLLALLGLVV). Over 273-390 (KRAVERRKAL…DSDDYINVPA (118 aa)) the chain is Cytoplasmic. Composition is skewed to low complexity over residues 293-311 (MRALESSQRPRGSPRPRSQ) and 325-334 (ADAAGTGEAP). The segment at 293 to 348 (MRALESSQRPRGSPRPRSQNNIYSACPRRARGADAAGTGEAPVPGPGAPLPPAPLQ) is disordered. Pro residues predominate over residues 335 to 346 (VPGPGAPLPPAP).

In terms of assembly, interacts (via Ig-like domain) with IGHM (via CH4/Cmu4 domain), both secreted and membrane-bound IgM; the interaction is glycan-independent and multivalent theoretically involving up to eight binding sites for the IgM pentamer. In terms of processing, phosphorylated on both Tyr and Ser residues. O-glycosylated. Sialylated. O-linked glycans regulate trafficking to the plasma membrane. In terms of tissue distribution, expressed by CD19-positive B cells and CD4-positive and CD8-positive T cell populations in primary and secondary lymphoid tissues (at protein level). Among B cell subsets, detected in a subset of bone marrow pro- and pre-B cells, in most follicular and memory B cells and in a small subset of germinal center B cells (at protein level). Expressed at lower levels in CD56-positive NK cells (at protein level). Expressed in lymph nodes, lung, thymus and kidneys. Very weak expression detected in spleen, liver, heart, and salivary gland.

It is found in the cell membrane. Its subcellular location is the early endosome membrane. The protein resides in the golgi apparatus. The protein localises to the trans-Golgi network membrane. It localises to the lysosome membrane. It is found in the secreted. High-affinity Fc receptor for immunoglobulin M (IgM), both secreted and membrane-bound IgM. Primarily regulates IgM transport and homeostasis. In lymphoid cells, enables exocytosis of membrane-bound IgM on the plasma membrane as well as endocytosis of IgM-antigen complexes toward lysosomes for degradation. In mucosal epithelium, mediates retrotranscytosis of antigen-IgM complexes across mucosal M cells toward antigen-presenting cells in mucosal lymphoid tissues. Triggers costimulatory signaling and mediates most of IgM effector functions involved in B cell development and primary immune response to infection. Likely limits tonic IgM BCR signaling to self-antigens for proper negative selection of autoreactive B cells in the bone marrow and for the maintenance of regulatory B cell pool in peripheral lymphoid organs. Mediates antibody responses to T cell-dependent and T cell-independent antigens and promotes induction of an efficient neutralizing IgG response. Engages in cross-talk with antigen-receptor signaling via the non-canonical NF-kappa-B, MAP kinases and calcium signaling pathways. The chain is Immunoglobulin mu Fc receptor from Homo sapiens (Human).